Consider the following 297-residue polypeptide: Palmitoyl-protein thioesterase ABHD10, mitochondrial (297 aa).

A mitochondrion-targeting transit peptide spans 1-43 (MAAWAPCRRWGWAAVSFGRHPGLSASLARKPPRAWWLSACRQK). The AB hydrolase-1 domain occupies 69–196 (IIFIPGYLSN…EIEMKGEWTL (128 aa)). Residues Ser143, Asp240, and His270 each act as charge relay system in the active site.

It belongs to the AB hydrolase superfamily.

Its subcellular location is the mitochondrion. The catalysed reaction is S-hexadecanoyl-L-cysteinyl-[protein] + H2O = L-cysteinyl-[protein] + hexadecanoate + H(+). It catalyses the reaction mycophenolic acid O-acyl-beta-D-glucuronide + H2O = mycophenolate + D-glucuronate + H(+). Inhibited by palmostatin-B. In terms of biological role, acts as an acyl-protein thioesterase that hydrolyzes fatty acids from acylated residues in proteins. Regulates the mitochondrial S-depalmitoylation of the nucleophilic active site residue of peroxiredoxin-5/PRDX5, a key antioxidant protein, therefore modulating mitochondrial antioxidant ability. Also catalyzes the deglucuronidation of mycophenolic acid acyl-glucuronide, an active metabolite of the immunosuppressant drug mycophenolate. The chain is Palmitoyl-protein thioesterase ABHD10, mitochondrial from Mus musculus (Mouse).